A 162-amino-acid polypeptide reads, in one-letter code: ATP synthase subunit b (162 aa).

A helical membrane pass occupies residues 2-22; that stretch reads LEFNATLLAQIVDFIILLIFL.

The protein belongs to the ATPase B chain family. F-type ATPases have 2 components, F(1) - the catalytic core - and F(0) - the membrane proton channel. F(1) has five subunits: alpha(3), beta(3), gamma(1), delta(1), epsilon(1). F(0) has three main subunits: a(1), b(2) and c(10-14). The alpha and beta chains form an alternating ring which encloses part of the gamma chain. F(1) is attached to F(0) by a central stalk formed by the gamma and epsilon chains, while a peripheral stalk is formed by the delta and b chains.

The protein localises to the cell membrane. F(1)F(0) ATP synthase produces ATP from ADP in the presence of a proton or sodium gradient. F-type ATPases consist of two structural domains, F(1) containing the extramembraneous catalytic core and F(0) containing the membrane proton channel, linked together by a central stalk and a peripheral stalk. During catalysis, ATP synthesis in the catalytic domain of F(1) is coupled via a rotary mechanism of the central stalk subunits to proton translocation. In terms of biological role, component of the F(0) channel, it forms part of the peripheral stalk, linking F(1) to F(0). The chain is ATP synthase subunit b from Pelotomaculum thermopropionicum (strain DSM 13744 / JCM 10971 / SI).